A 459-amino-acid chain; its full sequence is MNTGKITQIIGAVIDVEFSVDSMPKIYDALKVSETGLTLEVQQQLGDYVVRTIAMGGSEGLKRGLKVTNTGGPIKVPVGVKTLGRIMNVLGEPIDNAGDIGQEVSWAIHRSAPAYHELAPAAELLETGIKVIDLICPFAKGGKVGLFGGAGVGKTVNMMELIRNIAIEHSGYSVFSGVGERTREGNDFYHEMKESNVLDKVSLVYGQMNEPPGNRLRVALTGLTMAEYFRDEGHDVLLFIDNIYRYTLAGTEVSALLGRMPSAVGYQPTLASEMGALQERITSTKKGSITSIQAVYVPADDLTDPSPATTFAHLDATVVLSRQVAELGIYPAVDPLDSTSRQLDPLIVGEEHYNVARGVQSVLQRYKELKDIIAILGMDELSEEDKHSVSRARKIQRFLSQPFFVAEVFTGAPGKYVSLKDTIVGFKAILDGEMDDFPEQAFYMIGSIEEVRETNKEGL.

Residue 148-155 (GGAGVGKT) participates in ATP binding.

It belongs to the ATPase alpha/beta chains family. F-type ATPases have 2 components, CF(1) - the catalytic core - and CF(0) - the membrane proton channel. CF(1) has five subunits: alpha(3), beta(3), gamma(1), delta(1), epsilon(1). CF(0) has three main subunits: a(1), b(2) and c(9-12). The alpha and beta chains form an alternating ring which encloses part of the gamma chain. CF(1) is attached to CF(0) by a central stalk formed by the gamma and epsilon chains, while a peripheral stalk is formed by the delta and b chains.

Its subcellular location is the cell inner membrane. The enzyme catalyses ATP + H2O + 4 H(+)(in) = ADP + phosphate + 5 H(+)(out). Functionally, produces ATP from ADP in the presence of a proton gradient across the membrane. The catalytic sites are hosted primarily by the beta subunits. The sequence is that of ATP synthase subunit beta from Ruthia magnifica subsp. Calyptogena magnifica.